Here is a 178-residue protein sequence, read N- to C-terminus: Nucleoside triphosphate/diphosphate phosphatase (178 aa).

Residue arginine 23 is the Proton donor of the active site. The Mg(2+) site is built by asparagine 87, aspartate 103, aspartate 105, aspartate 107, aspartate 120, and glutamate 123.

Belongs to the Ntdp family. Mg(2+) is required as a cofactor.

It carries out the reaction a ribonucleoside 5'-triphosphate + H2O = a ribonucleoside 5'-diphosphate + phosphate + H(+). It catalyses the reaction a ribonucleoside 5'-diphosphate + H2O = a ribonucleoside 5'-phosphate + phosphate + H(+). In terms of biological role, has nucleoside phosphatase activity towards nucleoside triphosphates and nucleoside diphosphates. This Latilactobacillus sakei subsp. sakei (strain 23K) (Lactobacillus sakei subsp. sakei) protein is Nucleoside triphosphate/diphosphate phosphatase.